The following is a 170-amino-acid chain: ATP synthase subunit b (170 aa).

A helical transmembrane segment spans residues 22-41 (ILNWAVVVFGLYKFLPGFLG). The interval 76-98 (LSSAAEKASQIKADSLKRSESIR) is disordered. The span at 89-98 (DSLKRSESIR) shows a compositional bias: basic and acidic residues.

This sequence belongs to the ATPase B chain family. F-type ATPases have 2 components, F(1) - the catalytic core - and F(0) - the membrane proton channel. F(1) has five subunits: alpha(3), beta(3), gamma(1), delta(1), epsilon(1). F(0) has four main subunits: a(1), b(1), b'(1) and c(10-14). The alpha and beta chains form an alternating ring which encloses part of the gamma chain. F(1) is attached to F(0) by a central stalk formed by the gamma and epsilon chains, while a peripheral stalk is formed by the delta, b and b' chains.

It is found in the cellular thylakoid membrane. Functionally, f(1)F(0) ATP synthase produces ATP from ADP in the presence of a proton or sodium gradient. F-type ATPases consist of two structural domains, F(1) containing the extramembraneous catalytic core and F(0) containing the membrane proton channel, linked together by a central stalk and a peripheral stalk. During catalysis, ATP synthesis in the catalytic domain of F(1) is coupled via a rotary mechanism of the central stalk subunits to proton translocation. Component of the F(0) channel, it forms part of the peripheral stalk, linking F(1) to F(0). This Prochlorococcus marinus (strain AS9601) protein is ATP synthase subunit b.